The chain runs to 328 residues: DNA-directed RNA polymerase subunit alpha (328 aa).

An alpha N-terminal domain (alpha-NTD) region spans residues 1–234; the sequence is MQGSVTEFLK…EQLDAFVDLR (234 aa). Positions 248-328 are alpha C-terminal domain (alpha-CTD); sequence FDPILLRPVD…NWPPASIAED (81 aa).

Belongs to the RNA polymerase alpha chain family. Homodimer. The RNAP catalytic core consists of 2 alpha, 1 beta, 1 beta' and 1 omega subunit. When a sigma factor is associated with the core the holoenzyme is formed, which can initiate transcription.

It carries out the reaction RNA(n) + a ribonucleoside 5'-triphosphate = RNA(n+1) + diphosphate. In terms of biological role, DNA-dependent RNA polymerase catalyzes the transcription of DNA into RNA using the four ribonucleoside triphosphates as substrates. The chain is DNA-directed RNA polymerase subunit alpha from Haemophilus influenzae (strain PittEE).